A 330-amino-acid polypeptide reads, in one-letter code: Aspartate--ammonia ligase (330 aa).

This sequence belongs to the class-II aminoacyl-tRNA synthetase family. AsnA subfamily.

Its subcellular location is the cytoplasm. It catalyses the reaction L-aspartate + NH4(+) + ATP = L-asparagine + AMP + diphosphate + H(+). It functions in the pathway amino-acid biosynthesis; L-asparagine biosynthesis; L-asparagine from L-aspartate (ammonia route): step 1/1. The sequence is that of Aspartate--ammonia ligase from Mannheimia succiniciproducens (strain KCTC 0769BP / MBEL55E).